Consider the following 1541-residue polypeptide: Regulator of G-protein signaling loco (1541 aa).

Residues 1-66 (MHHHHPPLPI…RRKKRANYNY (66 aa)) form a disordered region. The segment covering 11 to 36 (TGASGSTAVGTGAAAAEDASPAANSG) has biased composition (low complexity). Residues 40–53 (ISTSTTPSGSNSQQ) are compositionally biased toward polar residues. One can recognise a PDZ domain in the interval 71 to 148 (TVEVRRGYNG…SIRMQIAENY (78 aa)). The tract at residues 182 to 222 (AKLHRLRNSPQKKLNPPEAVEPHKSKSSPDHPTLKPVLEDP) is disordered. Over residues 201–214 (VEPHKSKSSPDHPT) the composition is skewed to basic and acidic residues. A PID domain is found at 247–423 (AALECRVIVG…VVNLVRSMYT (177 aa)). 2 disordered regions span residues 449–473 (GAVA…SNSD) and 708–761 (SEPD…ASMN). 2 stretches are compositionally biased toward polar residues: residues 457-473 (PQPS…SNSD) and 744-761 (EQQQ…ASMN). The region spanning 827–943 (SFERMLQDAA…IRSDLYKSCV (117 aa)) is the RGS domain. The interval 978-1004 (SASNAEDRRRKSLLPWHRKTRSKSRDR) is disordered. Residues 987–999 (RKSLLPWHRKTRS) show a composition bias toward basic residues. RBD domains follow at residues 1072-1142 (SLCR…IERR) and 1143-1213 (VAFK…IVMV). The tract at residues 1258–1327 (DAAASEKSRP…SEEAATTQAV (70 aa)) is disordered. A compositionally biased stretch (polar residues) spans 1273–1285 (MKSNEAPSETSSL). Low complexity predominate over residues 1312 to 1325 (TSSSQQSEEAATTQ). In terms of domain architecture, GoLoco spans 1354-1376 (QDELLEGLKRAQLARLEDQRGTE). A disordered region spans residues 1410–1513 (KVPATPTEIP…ASKPGTFASK (104 aa)). Positions 1460–1469 (APPPLPPKPK) are enriched in pro residues. Polar residues predominate over residues 1483-1499 (PTGNYCNKYSPSKQVPT).

As to quaternary structure, interacts (via GoLoco and RGS domains) with Galphai (via GDP- or GTP-bound forms). Expressed in surface and longitudinal glial cells, gut and heart (at protein level).

It is found in the cytoplasm. It localises to the cell membrane. Its subcellular location is the apical cell membrane. In terms of biological role, acts as a regulator of G protein signaling (RGS). Modulates G protein alpha subunits nucleotide exchange and hydrolysis activities by functioning either as a GTPase-activating protein (GAP), thereby driving G protein alpha subunits into their inactive GDP-bound form, or as a GDP-dissociation inhibitor (GDI). Confers GDI and GAP activities on G(i) alpha subunit Galphai. Confers GAP activity on G(o)-alpha subunit Galphao and G(i) alpha subunit Galphai. Involved in the dorsal-ventral axis formation of the egg. Acts as a G-protein signaling for glial cell differentiation during embryogenesis; Galphai, Galphao and the G-protein coupled receptor, moody, are required in the surface glia to achieve effective insulation of the nerve cord. May be essential for nurse cell dumping during oogenesis. Required in neuroblast asymmetrical cell division. Plays a role in stress resistance and life span control. This Drosophila melanogaster (Fruit fly) protein is Regulator of G-protein signaling loco (loco).